A 115-amino-acid chain; its full sequence is Large ribosomal subunit protein uL22 (115 aa).

This sequence belongs to the universal ribosomal protein uL22 family. In terms of assembly, part of the 50S ribosomal subunit.

In terms of biological role, this protein binds specifically to 23S rRNA; its binding is stimulated by other ribosomal proteins, e.g. L4, L17, and L20. It is important during the early stages of 50S assembly. It makes multiple contacts with different domains of the 23S rRNA in the assembled 50S subunit and ribosome. The globular domain of the protein is located near the polypeptide exit tunnel on the outside of the subunit, while an extended beta-hairpin is found that lines the wall of the exit tunnel in the center of the 70S ribosome. This is Large ribosomal subunit protein uL22 from Streptomyces avermitilis (strain ATCC 31267 / DSM 46492 / JCM 5070 / NBRC 14893 / NCIMB 12804 / NRRL 8165 / MA-4680).